Here is a 369-residue protein sequence, read N- to C-terminus: Phosphate acyltransferase (369 aa).

This sequence belongs to the PlsX family. In terms of assembly, homodimer. Probably interacts with PlsY.

It localises to the cytoplasm. The enzyme catalyses a fatty acyl-[ACP] + phosphate = an acyl phosphate + holo-[ACP]. Its pathway is lipid metabolism; phospholipid metabolism. Functionally, catalyzes the reversible formation of acyl-phosphate (acyl-PO(4)) from acyl-[acyl-carrier-protein] (acyl-ACP). This enzyme utilizes acyl-ACP as fatty acyl donor, but not acyl-CoA. The chain is Phosphate acyltransferase from Gluconobacter oxydans (strain 621H) (Gluconobacter suboxydans).